The following is a 688-amino-acid chain: Translation initiation factor IF-2 (688 aa).

The segment at 62–103 (EFEVEEKVVRSKKNSNKKKKKGKGNEDKRQDNFAGRQQTQIV) is disordered. The segment covering 71–83 (RSKKNSNKKKKKG) has biased composition (basic residues). The tr-type G domain maps to 190-359 (ERPAVVTIMG…LLVSEVEEYK (170 aa)). A G1 region spans residues 199–206 (GHVDHGKT). GTP is bound at residue 199-206 (GHVDHGKT). The tract at residues 224–228 (GITQH) is G2. Residues 245 to 248 (DTPG) are G3. Residues 245 to 249 (DTPGH) and 299 to 302 (NKMD) each bind GTP. A G4 region spans residues 299–302 (NKMD). A G5 region spans residues 335–337 (SAI).

This sequence belongs to the TRAFAC class translation factor GTPase superfamily. Classic translation factor GTPase family. IF-2 subfamily.

It localises to the cytoplasm. Its function is as follows. One of the essential components for the initiation of protein synthesis. Protects formylmethionyl-tRNA from spontaneous hydrolysis and promotes its binding to the 30S ribosomal subunits. Also involved in the hydrolysis of GTP during the formation of the 70S ribosomal complex. The chain is Translation initiation factor IF-2 from Bacillus cereus (strain G9842).